We begin with the raw amino-acid sequence, 157 residues long: Small ribosomal subunit protein uS7 (157 aa).

The protein belongs to the universal ribosomal protein uS7 family. In terms of assembly, part of the 30S ribosomal subunit. Contacts proteins S9 and S11.

One of the primary rRNA binding proteins, it binds directly to 16S rRNA where it nucleates assembly of the head domain of the 30S subunit. Is located at the subunit interface close to the decoding center, probably blocks exit of the E-site tRNA. The chain is Small ribosomal subunit protein uS7 from Chlamydia pneumoniae (Chlamydophila pneumoniae).